Consider the following 117-residue polypeptide: Large ribosomal subunit protein uL24 (117 aa).

It belongs to the universal ribosomal protein uL24 family. Part of the 50S ribosomal subunit.

Functionally, one of two assembly initiator proteins, it binds directly to the 5'-end of the 23S rRNA, where it nucleates assembly of the 50S subunit. In terms of biological role, located at the polypeptide exit tunnel on the outside of the subunit. The sequence is that of Large ribosomal subunit protein uL24 from Methanothermobacter thermautotrophicus (strain ATCC 29096 / DSM 1053 / JCM 10044 / NBRC 100330 / Delta H) (Methanobacterium thermoautotrophicum).